The following is a 562-amino-acid chain: Protein TBF1 (562 aa).

The interval A376 to K414 is disordered. Residues S377–S400 show a composition bias toward low complexity. The HTH myb-type domain occupies R404–A460. A DNA-binding region (H-T-H motif) is located at residues W431–L456. Residues F495–M562 form a disordered region. Composition is skewed to polar residues over residues S496–D522 and G532–T552.

As to quaternary structure, homodimer.

It is found in the nucleus. It localises to the chromosome. Its subcellular location is the telomere. Its function is as follows. Binds the telomeric double-stranded TTAGGG repeat and negatively regulates telomere length. Involved in the regulation of gene expression. 52 binding sites have been identified, distributed over 15 chromosomes. A member of the general regulatory factors (GRFs) which act as genome partitioners. Acts as a chromatin insulator which are known as STARs (Subtelomeric anti-silencing region). STARs prevent negative or positive transcription influence by extending across chromatin to a promoter. This Saccharomyces cerevisiae (strain ATCC 204508 / S288c) (Baker's yeast) protein is Protein TBF1 (TBF1).